The following is a 339-amino-acid chain: Phenylalanine--tRNA ligase alpha subunit (339 aa).

Mg(2+) is bound at residue Glu253.

Belongs to the class-II aminoacyl-tRNA synthetase family. Phe-tRNA synthetase alpha subunit type 1 subfamily. Tetramer of two alpha and two beta subunits. Mg(2+) is required as a cofactor.

The protein localises to the cytoplasm. It carries out the reaction tRNA(Phe) + L-phenylalanine + ATP = L-phenylalanyl-tRNA(Phe) + AMP + diphosphate + H(+). This chain is Phenylalanine--tRNA ligase alpha subunit, found in Thioalkalivibrio sulfidiphilus (strain HL-EbGR7).